The chain runs to 310 residues: Protoheme IX farnesyltransferase (310 aa).

The next 9 membrane-spanning stretches (helical) occupy residues 37 to 57 (LITV…DVLL), 64 to 84 (LTLL…CYLN), 113 to 133 (ILAL…IVNH), 134 to 154 (VAAV…TMWL), 159 to 181 (TINT…AAVT), 186 to 208 (IDAW…ALAM), 215 to 237 (RAAG…QIVW), 257 to 277 (MLVM…GLKI), and 290 to 310 (MFFF…LVSL).

This sequence belongs to the UbiA prenyltransferase family. Protoheme IX farnesyltransferase subfamily. As to quaternary structure, interacts with CtaA.

It is found in the cell membrane. It carries out the reaction heme b + (2E,6E)-farnesyl diphosphate + H2O = Fe(II)-heme o + diphosphate. The protein operates within porphyrin-containing compound metabolism; heme O biosynthesis; heme O from protoheme: step 1/1. Converts heme B (protoheme IX) to heme O by substitution of the vinyl group on carbon 2 of heme B porphyrin ring with a hydroxyethyl farnesyl side group. The chain is Protoheme IX farnesyltransferase from Exiguobacterium sibiricum (strain DSM 17290 / CCUG 55495 / CIP 109462 / JCM 13490 / 255-15).